The primary structure comprises 335 residues: Glycerol-3-phosphate dehydrogenase [NAD(P)+] (335 aa).

Residues Trp-14, Arg-33, and Lys-111 each coordinate NADPH. The sn-glycerol 3-phosphate site is built by Lys-111, Gly-140, and Ser-142. Ala-144 provides a ligand contact to NADPH. Sn-glycerol 3-phosphate contacts are provided by Lys-195, Asp-248, Ser-258, Arg-259, and Asn-260. The Proton acceptor role is filled by Lys-195. Position 259 (Arg-259) interacts with NADPH. NADPH is bound by residues Val-283 and Glu-285.

This sequence belongs to the NAD-dependent glycerol-3-phosphate dehydrogenase family.

The protein resides in the cytoplasm. It catalyses the reaction sn-glycerol 3-phosphate + NAD(+) = dihydroxyacetone phosphate + NADH + H(+). The catalysed reaction is sn-glycerol 3-phosphate + NADP(+) = dihydroxyacetone phosphate + NADPH + H(+). The protein operates within membrane lipid metabolism; glycerophospholipid metabolism. Functionally, catalyzes the reduction of the glycolytic intermediate dihydroxyacetone phosphate (DHAP) to sn-glycerol 3-phosphate (G3P), the key precursor for phospholipid synthesis. The sequence is that of Glycerol-3-phosphate dehydrogenase [NAD(P)+] from Burkholderia mallei (strain NCTC 10247).